Here is a 124-residue protein sequence, read N- to C-terminus: UPF0538 protein (124 aa).

This sequence belongs to the UPF0538 family.

This Dictyostelium discoideum (Social amoeba) protein is UPF0538 protein.